A 596-amino-acid polypeptide reads, in one-letter code: Myosin light chain kinase 2, skeletal/cardiac muscle (596 aa).

Residues 1-224 are disordered; the sequence is MATENGAVEL…AGQAKMQGDT (224 aa). At Ala2 the chain carries N-acetylalanine. A compositionally biased stretch (basic and acidic residues) spans 40–63; it reads DPKKAPDPPTLKKDAKAPASEKGD. Low complexity predominate over residues 88–104; it reads EGSAGPPAALPQQTATP. 3 positions are modified to phosphoserine: Ser143, Ser149, and Ser151. The segment covering 189-209 has biased composition (basic and acidic residues); it reads RPAKAEEGKNILAESQKEVGE. The 256-residue stretch at 285-540 folds into the Protein kinase domain; that stretch reads MNSKEALGGG…AAQCLAHPWL (256 aa). ATP is bound by residues 291–299 and Lys314; that span reads LGGGKFGAV. The Proton acceptor role is filled by Asp406. At Thr445 the chain carries Phosphothreonine. Positions 574 to 586 are calmodulin-binding; sequence IAVSAANRFKKIS.

Belongs to the protein kinase superfamily. CAMK Ser/Thr protein kinase family. May interact with centrin. As to expression, heart and skeletal muscles. Increased expression in the apical tissue compared to the interventricular septal tissue.

It is found in the cytoplasm. The catalysed reaction is L-seryl-[myosin light chain] + ATP = O-phospho-L-seryl-[myosin light chain] + ADP + H(+). It carries out the reaction L-threonyl-[myosin light chain] + ATP = O-phospho-L-threonyl-[myosin light chain] + ADP + H(+). Functionally, implicated in the level of global muscle contraction and cardiac function. Phosphorylates a specific serine in the N-terminus of a myosin light chain. This Homo sapiens (Human) protein is Myosin light chain kinase 2, skeletal/cardiac muscle (MYLK2).